We begin with the raw amino-acid sequence, 671 residues long: DNA ligase (671 aa).

Residues 32-36 (DAEYD), 81-82 (SL), and Glu-113 each bind NAD(+). Lys-115 serves as the catalytic N6-AMP-lysine intermediate. NAD(+) contacts are provided by Arg-136, Glu-173, Lys-290, and Lys-314. Zn(2+) contacts are provided by Cys-408, Cys-411, Cys-426, and Cys-432. In terms of domain architecture, BRCT spans 593-671 (EIDSPFAGKT…EAEMMRLLGE (79 aa)).

Belongs to the NAD-dependent DNA ligase family. LigA subfamily. It depends on Mg(2+) as a cofactor. The cofactor is Mn(2+).

It catalyses the reaction NAD(+) + (deoxyribonucleotide)n-3'-hydroxyl + 5'-phospho-(deoxyribonucleotide)m = (deoxyribonucleotide)n+m + AMP + beta-nicotinamide D-nucleotide.. Its function is as follows. DNA ligase that catalyzes the formation of phosphodiester linkages between 5'-phosphoryl and 3'-hydroxyl groups in double-stranded DNA using NAD as a coenzyme and as the energy source for the reaction. It is essential for DNA replication and repair of damaged DNA. This Klebsiella pneumoniae (strain 342) protein is DNA ligase.